The sequence spans 517 residues: Cytochrome P450 1A1 (517 aa).

Residues 34 to 45 (WQPRVPKGLKSP) are mitochondrial targeting signal. The O-linked (GlcNAc) serine glycan is linked to serine 72. Phenylalanine 229 contacts substrate. Position 462 (cysteine 462) interacts with heme.

It belongs to the cytochrome P450 family. Interacts with cytosolic chaperones HSP70 and HSP90; this interaction is required for initial targeting to mitochondria. Interacts (via mitochondrial targeting signal) with TOMM40 (via N-terminus); this interaction is required for translocation across the mitochondrial outer membrane. Heme is required as a cofactor.

The protein resides in the endoplasmic reticulum membrane. It is found in the mitochondrion inner membrane. It localises to the microsome membrane. Its subcellular location is the cytoplasm. It carries out the reaction an organic molecule + reduced [NADPH--hemoprotein reductase] + O2 = an alcohol + oxidized [NADPH--hemoprotein reductase] + H2O + H(+). The enzyme catalyses estrone + reduced [NADPH--hemoprotein reductase] + O2 = 2-hydroxyestrone + oxidized [NADPH--hemoprotein reductase] + H2O + H(+). It catalyses the reaction estrone + reduced [NADPH--hemoprotein reductase] + O2 = 4-hydroxyestrone + oxidized [NADPH--hemoprotein reductase] + H2O + H(+). The catalysed reaction is estrone + reduced [NADPH--hemoprotein reductase] + O2 = 6alpha-hydroxyestrone + oxidized [NADPH--hemoprotein reductase] + H2O + H(+). It carries out the reaction estrone + reduced [NADPH--hemoprotein reductase] + O2 = 15alpha-hydroxyestrone + oxidized [NADPH--hemoprotein reductase] + H2O + H(+). The enzyme catalyses estrone + reduced [NADPH--hemoprotein reductase] + O2 = 16alpha-hydroxyestrone + oxidized [NADPH--hemoprotein reductase] + H2O + H(+). It catalyses the reaction 17beta-estradiol + reduced [NADPH--hemoprotein reductase] + O2 = 2-hydroxy-17beta-estradiol + oxidized [NADPH--hemoprotein reductase] + H2O + H(+). The catalysed reaction is 17beta-estradiol + reduced [NADPH--hemoprotein reductase] + O2 = 4-hydroxy-17beta-estradiol + oxidized [NADPH--hemoprotein reductase] + H2O + H(+). It carries out the reaction 17beta-estradiol + reduced [NADPH--hemoprotein reductase] + O2 = 6alpha-hydroxy-17beta-estradiol + oxidized [NADPH--hemoprotein reductase] + H2O + H(+). The enzyme catalyses 17beta-estradiol + reduced [NADPH--hemoprotein reductase] + O2 = 7alpha-hydroxy-17beta-estradiol + oxidized [NADPH--hemoprotein reductase] + H2O + H(+). It catalyses the reaction 17beta-estradiol + reduced [NADPH--hemoprotein reductase] + O2 = 15alpha-hydroxy-17beta-estradiol + oxidized [NADPH--hemoprotein reductase] + H2O + H(+). The catalysed reaction is (5Z,8Z,11Z)-eicosatrienoate + reduced [NADPH--hemoprotein reductase] + O2 = 19-hydroxy-(5Z,8Z,11Z)-eicosatrienoate + oxidized [NADPH--hemoprotein reductase] + H2O + H(+). It carries out the reaction (5Z,8Z,11Z,14Z)-eicosatetraenoate + reduced [NADPH--hemoprotein reductase] + O2 = 16-hydroxy-(5Z,8Z,11Z,14Z)-eicosatetraenoate + oxidized [NADPH--hemoprotein reductase] + H2O + H(+). The enzyme catalyses (5Z,8Z,11Z,14Z)-eicosatetraenoate + reduced [NADPH--hemoprotein reductase] + O2 = 17-hydroxy-(5Z,8Z,11Z,14Z)-eicosatetraenoate + oxidized [NADPH--hemoprotein reductase] + H2O + H(+). It catalyses the reaction (5Z,8Z,11Z,14Z)-eicosatetraenoate + reduced [NADPH--hemoprotein reductase] + O2 = 18-hydroxy-(5Z,8Z,11Z,14Z)-eicosatetraenoate + oxidized [NADPH--hemoprotein reductase] + H2O + H(+). The catalysed reaction is (5Z,8Z,11Z,14Z)-eicosatetraenoate + reduced [NADPH--hemoprotein reductase] + O2 = 19-hydroxy-(5Z,8Z,11Z,14Z)-eicosatetraenoate + oxidized [NADPH--hemoprotein reductase] + H2O + H(+). It carries out the reaction (5Z,8Z,11Z,14Z,17Z)-eicosapentaenoate + reduced [NADPH--hemoprotein reductase] + O2 = 19-hydroxy-(5Z,8Z,11Z,14Z,17Z)-eicosapentaenoate + oxidized [NADPH--hemoprotein reductase] + H2O + H(+). The enzyme catalyses (5Z,8Z,11Z,14Z)-eicosatetraenoate + reduced [NADPH--hemoprotein reductase] + O2 = (8R,9S)-epoxy-(5Z,11Z,14Z)-eicosatrienoate + oxidized [NADPH--hemoprotein reductase] + H2O + H(+). It catalyses the reaction (5Z,8Z,11Z,14Z)-eicosatetraenoate + reduced [NADPH--hemoprotein reductase] + O2 = (11R,12S)-epoxy-(5Z,8Z,14Z)-eicosatrienoate + oxidized [NADPH--hemoprotein reductase] + H2O + H(+). The catalysed reaction is (5Z,8Z,11Z,14Z)-eicosatetraenoate + reduced [NADPH--hemoprotein reductase] + O2 = (14S,15R)-epoxy-(5Z,8Z,11Z)-eicosatrienoate + oxidized [NADPH--hemoprotein reductase] + H2O + H(+). It carries out the reaction (5Z,8Z,11Z,14Z)-eicosatetraenoate + reduced [NADPH--hemoprotein reductase] + O2 = (14R,15S)-epoxy-(5Z,8Z,11Z)-eicosatrienoate + oxidized [NADPH--hemoprotein reductase] + H2O + H(+). The enzyme catalyses (5Z,8Z,11Z,14Z,17Z)-eicosapentaenoate + reduced [NADPH--hemoprotein reductase] + O2 = (17R,18S)-epoxy-(5Z,8Z,11Z,14Z)-eicosatetraenoate + oxidized [NADPH--hemoprotein reductase] + H2O + H(+). It catalyses the reaction (4Z,7Z,10Z,13Z,16Z,19Z)-docosahexaenoate + reduced [NADPH--hemoprotein reductase] + O2 = (19S,20R)-epoxy-(4Z,7Z,10Z,13Z,16Z)-docosapentaenoate + oxidized [NADPH--hemoprotein reductase] + H2O + H(+). The catalysed reaction is (4Z,7Z,10Z,13Z,16Z,19Z)-docosahexaenoate + reduced [NADPH--hemoprotein reductase] + O2 = (19R,20S)-epoxy-(4Z,7Z,10Z,13Z,16Z)-docosapentaenoate + oxidized [NADPH--hemoprotein reductase] + H2O + H(+). It carries out the reaction all-trans-retinol + reduced [NADPH--hemoprotein reductase] + O2 = all-trans-retinal + oxidized [NADPH--hemoprotein reductase] + 2 H2O + H(+). The enzyme catalyses all-trans-retinal + reduced [NADPH--hemoprotein reductase] + O2 = all-trans-retinoate + oxidized [NADPH--hemoprotein reductase] + H2O + 2 H(+). It catalyses the reaction (13S)-hydroperoxy-(9Z,11E)-octadecadienoate = 13-oxo-(9Z,11E)-octadecadienoate + H2O. The catalysed reaction is (12S)-hydroperoxy-(5Z,8Z,10E,14Z)-eicosatetraenoate = 12-oxo-(5Z,8Z,10E,14Z)-eicosatetraenoate + H2O. It carries out the reaction (15S)-hydroperoxy-(5Z,8Z,11Z,13E)-eicosatetraenoate = 15-oxo-(5Z,8Z,11Z,13E)-eicosatetraenoate + H2O. The enzyme catalyses (5S)-hydroperoxy-(6E,8Z,11Z,14Z)-eicosatetraenoate = 5-oxo-(6E,8Z,11Z,14Z)-eicosatetraenoate + H2O. Its pathway is steroid hormone biosynthesis. It participates in lipid metabolism; fatty acid metabolism. It functions in the pathway cofactor metabolism; retinol metabolism. In terms of biological role, a cytochrome P450 monooxygenase involved in the metabolism of various endogenous substrates, including fatty acids, steroid hormones and vitamins. Mechanistically, uses molecular oxygen inserting one oxygen atom into a substrate, and reducing the second into a water molecule, with two electrons provided by NADPH via cytochrome P450 reductase (CPR; NADPH-ferrihemoprotein reductase). Catalyzes the hydroxylation of carbon-hydrogen bonds. Exhibits high catalytic activity for the formation of hydroxyestrogens from estrone (E1) and 17beta-estradiol (E2), namely 2-hydroxy E1 and E2, as well as D-ring hydroxylated E1 and E2 at the C15alpha and C16alpha positions. Displays different regioselectivities for polyunsaturated fatty acids (PUFA) hydroxylation. Catalyzes the epoxidation of double bonds of certain PUFA. Converts arachidonic acid toward epoxyeicosatrienoic acid (EET) regioisomers, 8,9-, 11,12-, and 14,15-EET, that function as lipid mediators in the vascular system. Displays an absolute stereoselectivity in the epoxidation of eicosapentaenoic acid (EPA) producing the 17(R),18(S) enantiomer. May play an important role in all-trans retinoic acid biosynthesis in extrahepatic tissues. Catalyzes two successive oxidative transformation of all-trans retinol to all-trans retinal and then to the active form all-trans retinoic acid. May also participate in eicosanoids metabolism by converting hydroperoxide species into oxo metabolites (lipoxygenase-like reaction, NADPH-independent). The sequence is that of Cytochrome P450 1A1 (CYP1A1) from Felis catus (Cat).